A 318-amino-acid polypeptide reads, in one-letter code: Cytochrome f (318 aa).

A signal peptide spans 1-34 (MQNRNFFEYPKNWIILLIPIFTTFNLLFTSDCYA). Heme contacts are provided by Phe-35, Cys-55, Cys-58, and His-59. Residues 284 to 303 (LQGLLVFLFLVVLAQVFLVL) form a helical membrane-spanning segment.

This sequence belongs to the cytochrome f family. The 4 large subunits of the cytochrome b6-f complex are cytochrome b6, subunit IV (17 kDa polypeptide, petD), cytochrome f and the Rieske protein, while the 4 small subunits are PetG, PetL, PetM and PetN. The complex functions as a dimer. It depends on heme as a cofactor.

It is found in the plastid. It localises to the chloroplast thylakoid membrane. Functionally, component of the cytochrome b6-f complex, which mediates electron transfer between photosystem II (PSII) and photosystem I (PSI), cyclic electron flow around PSI, and state transitions. The sequence is that of Cytochrome f from Chaetosphaeridium globosum (Charophycean green alga).